The primary structure comprises 160 residues: Ribosome maturation factor RimP (160 aa).

The protein belongs to the RimP family.

The protein localises to the cytoplasm. Required for maturation of 30S ribosomal subunits. The chain is Ribosome maturation factor RimP from Cronobacter sakazakii (strain ATCC BAA-894) (Enterobacter sakazakii).